The sequence spans 257 residues: MSDSSREENVYMAKLADEAERYEEMVEFMEKVAKTVEVEELTVEERNLLSVAYKNVIGARRASWRIISSIEQKEESRGNEDHVAIIKEYRGKIEAELSKICDGILNLLESNLIPSAASPESKVFYLKMKGDYHRYLAEFKTGAERKEAAESTLLAYKSAQDIALADLAPTHPIRLGLALNFSVFYYEILNSPDRACNLAKQAFDEAISELDTLGEESYKDSTLIMQLLRDNLTLWTSDITDIAGDEIKETSKQQPGE.

Belongs to the 14-3-3 family.

The sequence is that of 14-3-3-like protein A (GF14A) from Glycine max (Soybean).